The following is a 155-amino-acid chain: Regulatory protein RecX (155 aa).

It belongs to the RecX family.

It localises to the cytoplasm. Functionally, modulates RecA activity. The polypeptide is Regulatory protein RecX (Vibrio campbellii (strain ATCC BAA-1116)).